Consider the following 72-residue polypeptide: MTKEENIEMQGIVLDTLPNTMFKVELENKHVVLAHISGKMRKNYIRILTGDKVTVELTPYDLSKGRIIFRSR.

The region spanning 1–72 (MTKEENIEMQ…SKGRIIFRSR (72 aa)) is the S1-like domain.

The protein belongs to the IF-1 family. Component of the 30S ribosomal translation pre-initiation complex which assembles on the 30S ribosome in the order IF-2 and IF-3, IF-1 and N-formylmethionyl-tRNA(fMet); mRNA recruitment can occur at any time during PIC assembly.

It is found in the cytoplasm. Its function is as follows. One of the essential components for the initiation of protein synthesis. Stabilizes the binding of IF-2 and IF-3 on the 30S subunit to which N-formylmethionyl-tRNA(fMet) subsequently binds. Helps modulate mRNA selection, yielding the 30S pre-initiation complex (PIC). Upon addition of the 50S ribosomal subunit IF-1, IF-2 and IF-3 are released leaving the mature 70S translation initiation complex. This is Translation initiation factor IF-1 from Wigglesworthia glossinidia brevipalpis.